Consider the following 103-residue polypeptide: N(4)-acetylcytidine amidohydrolase (103 aa).

The region spanning Ile6–Gln94 is the ASCH domain. The active-site Proton acceptor is Lys21. Thr24 acts as the Nucleophile in catalysis. The Proton donor role is filled by Glu74.

It belongs to the N(4)-acetylcytidine amidohydrolase family.

It carries out the reaction N(4)-acetylcytidine + H2O = cytidine + acetate + H(+). The enzyme catalyses N(4)-acetyl-2'-deoxycytidine + H2O = 2'-deoxycytidine + acetate + H(+). The catalysed reaction is N(4)-acetylcytosine + H2O = cytosine + acetate + H(+). In terms of biological role, catalyzes the hydrolysis of N(4)-acetylcytidine (ac4C). The sequence is that of N(4)-acetylcytidine amidohydrolase (yqfB) from Salmonella schwarzengrund (strain CVM19633).